A 675-amino-acid polypeptide reads, in one-letter code: Protein kintoun (675 aa).

Disordered stretches follow at residues 98–131, 265–293, 310–340, and 509–659; these read ASKK…KQGA, AGEG…TAPP, EGGA…AVAK, and EAAH…AAPT. Residues 102-113 are compositionally biased toward basic and acidic residues; the sequence is QQQEQEKQEKEQ. Low complexity predominate over residues 279-293; sequence VPGVPDLPGAKTAPP. A compositionally biased stretch (low complexity) spans 529-543; the sequence is AAAASSGAAPAPAAA. Residues 544-553 show a composition bias toward acidic residues; it reads SEEEEEEDKE. The segment covering 564–577 has biased composition (low complexity); that stretch reads DPAAAAAAAGASSG. Residues 579-596 show a composition bias toward basic and acidic residues; the sequence is ELTENERKWRELHARQQQ. 2 stretches are compositionally biased toward low complexity: residues 604-617 and 628-659; these read AAEA…AAAE and VAQG…AAPT.

This sequence belongs to the PIH1 family. Kintoun subfamily.

The protein localises to the cytoplasm. Functionally, required for cytoplasmic pre-assembly of axonemal dyneins, thereby playing a central role in motility in cilia and flagella. Involved in pre-assembly of dynein arm complexes in the cytoplasm before intraflagellar transport loads them for the ciliary compartment. This Chlamydomonas reinhardtii (Chlamydomonas smithii) protein is Protein kintoun (pf13).